A 322-amino-acid chain; its full sequence is Pantothenate kinase (322 aa).

100–107 contacts ATP; it reads GSVAVGKS.

It belongs to the prokaryotic pantothenate kinase family.

It is found in the cytoplasm. The enzyme catalyses (R)-pantothenate + ATP = (R)-4'-phosphopantothenate + ADP + H(+). The protein operates within cofactor biosynthesis; coenzyme A biosynthesis; CoA from (R)-pantothenate: step 1/5. The protein is Pantothenate kinase of Brucella canis (strain ATCC 23365 / NCTC 10854 / RM-666).